The sequence spans 193 residues: Probable 3' cyclic ADP-D-ribose synthase ThsB' (193 aa).

As to quaternary structure, homodimer.

The catalysed reaction is NAD(+) = 3'cADPR + nicotinamide + H(+). Its function is as follows. TIR-like domain-containing component of the Thoeris antiviral defense system, composed of ThsA and ThsB and ThsB'. In the presence of NAD(+) produces a signaling molecule that activates cognate ThsA (AC J8G6Z1) to hydrolyze NAD(+). The signaling molecule is a cyclic ADP-D-ribose isomer and may be 3' cyclic ADP-D-ribose (3'cADPR); it is not 2'cADPR. The sequence is that of Probable 3' cyclic ADP-D-ribose synthase ThsB' from Bacillus cereus (strain MSX-D12).